We begin with the raw amino-acid sequence, 853 residues long: Protein translocase subunit SecA 1 (853 aa).

ATP contacts are provided by residues glutamine 85, 103–107 (GEGKT), and aspartate 492.

The protein belongs to the SecA family. As to quaternary structure, monomer and homodimer. Part of the essential Sec protein translocation apparatus which comprises SecA, SecYEG and auxiliary proteins SecDF. Other proteins may also be involved.

It localises to the cell membrane. Its subcellular location is the cytoplasm. It carries out the reaction ATP + H2O + cellular proteinSide 1 = ADP + phosphate + cellular proteinSide 2.. Part of the Sec protein translocase complex. Interacts with the SecYEG preprotein conducting channel. Has a central role in coupling the hydrolysis of ATP to the transfer of proteins into and across the cell membrane, serving as an ATP-driven molecular motor driving the stepwise translocation of polypeptide chains across the membrane. This Corynebacterium diphtheriae (strain ATCC 700971 / NCTC 13129 / Biotype gravis) protein is Protein translocase subunit SecA 1.